Here is a 221-residue protein sequence, read N- to C-terminus: Uracil-DNA glycosylase 1 (221 aa).

Residue Asp61 is the Proton acceptor of the active site.

This sequence belongs to the uracil-DNA glycosylase (UDG) superfamily. UNG family.

It localises to the cytoplasm. The catalysed reaction is Hydrolyzes single-stranded DNA or mismatched double-stranded DNA and polynucleotides, releasing free uracil.. Functionally, excises uracil residues from the DNA which can arise as a result of misincorporation of dUMP residues by DNA polymerase or due to deamination of cytosine. This Listeria monocytogenes serotype 4b (strain F2365) protein is Uracil-DNA glycosylase 1.